A 258-amino-acid chain; its full sequence is Rho-related GTP-binding protein RhoU (258 aa).

Positions 1-45 (MPPQQGDPAFPDRCEAPPVPPRRERGGRGGRGPGEPGGRGRAGGA) are disordered. Residues 10-27 (FPDRCEAPPVPPRRERGG) show a composition bias toward basic and acidic residues. Residues 29-45 (GGRGPGEPGGRGRAGGA) show a composition bias toward gly residues. Residues 56–63 (GDGAVGKT), 103–107 (DTAGQ), and 161–164 (TQSD) contribute to the GTP site. Residues lysine 177 and lysine 248 each participate in a glycyl lysine isopeptide (Lys-Gly) (interchain with G-Cter in ubiquitin) cross-link. Residue cysteine 256 is the site of S-palmitoyl cysteine attachment.

The protein belongs to the small GTPase superfamily. Rho family. In terms of assembly, interacts with PAK1. Interacts with PAK3. Interacts with ARHGAP30 in a GTP-independent manner. In its GTP-loaded conformation, interacts with ARHGAP31. Interacts with PTK2B/PYK2. Interacts with PAK4; the interaction is PAK4 kinase activity-independent and protects RHOU from ubiquitination. It depends on Mg(2+) as a cofactor. In terms of processing, ubiquitinated. 'Lys-48'-linked ubiquitination at Lys-177 and Lys-248 by the ECS(RAB40A) complex leading to its degradation. Tyrosine phosphorylated by SRC in response to PTK2B/PYK2 activation. As to expression, ubiquitously expressed in all tissues examined. Expressed at high levels in the stomach, small intestine, brain, skeletal muscle and placenta.

It localises to the cell membrane. The protein resides in the golgi apparatus membrane. Its subcellular location is the cell junction. The protein localises to the focal adhesion. It is found in the cell projection. It localises to the podosome. In terms of biological role, binds to and activates protein kinase PAK1. Plays a role in the regulation of cell morphology, cytoskeletal organization and focal adhesion assembly during cell migration. Also stimulates quiescent cells to reenter the cell cycle. Has no detectable GTPase activity but its high intrinsic guanine nucleotide exchange activity suggests it is constitutively GTP-bound. In Homo sapiens (Human), this protein is Rho-related GTP-binding protein RhoU.